Consider the following 235-residue polypeptide: Phosphoribosylaminoimidazole-succinocarboxamide synthase (235 aa).

It belongs to the SAICAR synthetase family.

It carries out the reaction 5-amino-1-(5-phospho-D-ribosyl)imidazole-4-carboxylate + L-aspartate + ATP = (2S)-2-[5-amino-1-(5-phospho-beta-D-ribosyl)imidazole-4-carboxamido]succinate + ADP + phosphate + 2 H(+). It functions in the pathway purine metabolism; IMP biosynthesis via de novo pathway; 5-amino-1-(5-phospho-D-ribosyl)imidazole-4-carboxamide from 5-amino-1-(5-phospho-D-ribosyl)imidazole-4-carboxylate: step 1/2. The chain is Phosphoribosylaminoimidazole-succinocarboxamide synthase from Clostridium novyi (strain NT).